The primary structure comprises 182 residues: RNA pyrophosphohydrolase (182 aa).

In terms of domain architecture, Nudix hydrolase spans 6 to 149; sequence GYRPNVGIIL…KRLVYEQALN (144 aa). The Nudix box motif lies at 38–59; sequence GGIKRGETPEEAMFRELYEEVG. The segment at 162 to 182 is disordered; that stretch reads PRHKKEQEPFSDVVDSVRSEE.

It belongs to the Nudix hydrolase family. RppH subfamily. The cofactor is a divalent metal cation.

Accelerates the degradation of transcripts by removing pyrophosphate from the 5'-end of triphosphorylated RNA, leading to a more labile monophosphorylated state that can stimulate subsequent ribonuclease cleavage. This is RNA pyrophosphohydrolase from Dechloromonas aromatica (strain RCB).